We begin with the raw amino-acid sequence, 344 residues long: Dihydroorotate dehydrogenase (quinone) (344 aa).

FMN contacts are provided by residues 65-69 (AGLDK) and Thr89. Lys69 is a substrate binding site. 114–118 (NRMGF) contacts substrate. FMN is bound by residues Asn145 and Asn178. Residue Asn178 coordinates substrate. Ser181 acts as the Nucleophile in catalysis. Asn183 lines the substrate pocket. Residues Lys223 and Thr251 each contribute to the FMN site. 252–253 (NT) is a substrate binding site. FMN is bound by residues Gly274, Gly303, and 324-325 (YS).

This sequence belongs to the dihydroorotate dehydrogenase family. Type 2 subfamily. Monomer. FMN is required as a cofactor.

The protein localises to the cell membrane. It catalyses the reaction (S)-dihydroorotate + a quinone = orotate + a quinol. Its pathway is pyrimidine metabolism; UMP biosynthesis via de novo pathway; orotate from (S)-dihydroorotate (quinone route): step 1/1. Functionally, catalyzes the conversion of dihydroorotate to orotate with quinone as electron acceptor. The protein is Dihydroorotate dehydrogenase (quinone) of Cupriavidus pinatubonensis (strain JMP 134 / LMG 1197) (Cupriavidus necator (strain JMP 134)).